The primary structure comprises 317 residues: Fe-S cluster assembly protein DRE2 (317 aa).

Residues 1–131 (MERMLFLSPP…KPNFGAQDTV (131 aa)) are N-terminal SAM-like domain. Positions 132–209 (PLKLGKKKKA…EEALMDEEDM (78 aa)) are linker. [2Fe-2S] cluster contacts are provided by Cys219, Cys230, Cys233, and Cys235. The interval 219 to 235 (CRPKAGKRRRACKDCTC) is fe-S binding site A. [4Fe-4S] cluster is bound by residues Cys280, Cys283, Cys291, and Cys294. 2 consecutive short sequence motifs (cx2C motif) follow at residues 280-283 (CGNC) and 291-294 (CDGC). A fe-S binding site B region spans residues 280–294 (CGNCALGDAFRCDGC).

This sequence belongs to the anamorsin family. In terms of assembly, monomer. Interacts with TAH18. Interacts with MIA40. The cofactor is [2Fe-2S] cluster. Requires [4Fe-4S] cluster as cofactor.

The protein localises to the cytoplasm. The protein resides in the mitochondrion intermembrane space. In terms of biological role, component of the cytosolic iron-sulfur (Fe-S) protein assembly (CIA) machinery required for the maturation of extramitochondrial Fe-S proteins. Part of an electron transfer chain functioning in an early step of cytosolic Fe-S biogenesis, facilitating the de novo assembly of a [4Fe-4S] cluster on the scaffold complex CFD1-NBP35. Electrons are transferred to DRE2 from NADPH via the FAD- and FMN-containing protein TAH18. TAH18-DRE2 are also required for the assembly of the diferric tyrosyl radical cofactor of ribonucleotide reductase (RNR), probably by providing electrons for reduction during radical cofactor maturation in the catalytic small subunit RNR2. The chain is Fe-S cluster assembly protein DRE2 from Uncinocarpus reesii (strain UAMH 1704).